A 150-amino-acid polypeptide reads, in one-letter code: UPF0178 protein Ssed_1350 (150 aa).

The protein belongs to the UPF0178 family.

This chain is UPF0178 protein Ssed_1350, found in Shewanella sediminis (strain HAW-EB3).